We begin with the raw amino-acid sequence, 860 residues long: DNA primase (860 aa).

The CHC2-type zinc-finger motif lies at 804 to 842; that stretch reads CLNRQHRGNRDNVLVYIQLKADGNRLILILWSTCFATKC.

It belongs to the herpesviridae DNA primase family. As to quaternary structure, associates with the helicase and the primase-associated factor to form the helicase-primase factor.

The protein localises to the host nucleus. Its function is as follows. Essential component of the helicase/primase complex. Unwinds the DNA at the replication forks and generates single-stranded DNA for both leading and lagging strand synthesis. The primase initiates primer synthesis and thereby produces large amount of short RNA primers on the lagging strand that the polymerase elongates using dNTPs. The sequence is that of DNA primase (U43) from Homo sapiens (Human).